Here is a 167-residue protein sequence, read N- to C-terminus: Troponin C-akin-1 protein (167 aa).

Residue tyrosine 17–leucine 20 participates in substrate binding. The Proton acceptor role is filled by glutamate 92.

Belongs to the gamma-glutamylcyclotransferase family. In embryos, expression is seen in heart cells of the dorsal vessel and hindgut visceral mesoderm.

Its function is as follows. Putative gamma-glutamylcyclotransferase. The polypeptide is Troponin C-akin-1 protein (Tina-1) (Drosophila melanogaster (Fruit fly)).